The primary structure comprises 599 residues: Thiamine transporter THI72 (599 aa).

Transmembrane regions (helical) follow at residues 42-62 (WGFW…GMWI), 78-98 (IGAF…NSCP), 112-132 (FVFG…MSIV), 174-194 (LIGF…KPYH), 197-217 (YILI…VIYL), 280-300 (IVAL…GASA), 333-353 (FFCG…NCGF), 372-392 (GAIF…YNSS), 395-415 (FLTV…VMIC), 447-467 (AIVA…WEVN), and 484-504 (SFFS…LFPF). The disordered stretch occupies residues 553 to 599 (HEYKPESSDDELPELTKTSSENTKVFEIVHQKDNEKESSTSSEKQIA). Residues serine 560 and serine 572 each carry the phosphoserine modification. Over residues 579-590 (EIVHQKDNEKES) the composition is skewed to basic and acidic residues.

Belongs to the purine-cytosine permease (2.A.39) family.

The protein resides in the membrane. Low affinity thiamine transporter responsible for intake of thiamine. It is possible that the primary function is the uptake of closely related compounds and that thiamine transport is a secondary activity of these proteins. In Saccharomyces cerevisiae (strain ATCC 204508 / S288c) (Baker's yeast), this protein is Thiamine transporter THI72 (THI72).